The sequence spans 910 residues: Eukaryotic translation initiation factor 3 subunit C (910 aa).

The segment at 1–21 is disordered; that stretch reads MSRFFANGSESESESSEEEIQ. Acidic residues predominate over residues 11 to 20; sequence SESESSEEEI. A phosphoserine mark is found at serine 34, serine 165, serine 176, and serine 185. The interval 157–281 is disordered; the sequence is FREAPDQESE…KRAEDDEDGE (125 aa). Positions 162 to 186 are enriched in acidic residues; sequence DQESEAEDEVVALESDGGDAGDDSD. Over residues 193–207 the composition is skewed to low complexity; sequence EAAPKAVKSAPAKAA. The segment covering 209-235 has biased composition (acidic residues); that stretch reads ADDDDSDDSIDWDSDSESETESSDDEN. The span at 240 to 268 shows a compositional bias: basic and acidic residues; sequence MRERFLKRTTEKEEKDDDKRKDKRKEQKT. In terms of domain architecture, PCI spans 639–815; the sequence is FHMHINLELL…ETVGMHRSEP (177 aa). The segment at 847-910 is disordered; the sequence is FFQRGNMGNR…QQQVQTIDEE (64 aa). A compositionally biased stretch (low complexity) spans 862–874; the sequence is NRNQNNQGGNWLG. Positions 882 to 891 are enriched in basic residues; sequence RNRNQRGHHK. Residues 895 to 910 show a composition bias toward low complexity; sequence DRQQQQQQQVQTIDEE.

It belongs to the eIF-3 subunit C family. As to quaternary structure, component of the eukaryotic translation initiation factor 3 (eIF-3) complex. The eIF-3 complex interacts with pix.

It is found in the cytoplasm. Component of the eukaryotic translation initiation factor 3 (eIF-3) complex, which is involved in protein synthesis of a specialized repertoire of mRNAs and, together with other initiation factors, stimulates binding of mRNA and methionyl-tRNAi to the 40S ribosome. The eIF-3 complex specifically targets and initiates translation of a subset of mRNAs involved in cell proliferation. This Drosophila sechellia (Fruit fly) protein is Eukaryotic translation initiation factor 3 subunit C.